The chain runs to 209 residues: Type III pantothenate kinase (209 aa).

Position 5–12 (5–12) interacts with ATP; the sequence is DIGNSNAN. Residues Tyr68 and 72 to 75 contribute to the substrate site; that span reads GIDR. The active-site Proton acceptor is Asp74. Asp89 lines the K(+) pocket. Position 92 (Ser92) interacts with ATP. Thr144 is a binding site for substrate.

It belongs to the type III pantothenate kinase family. Homodimer. NH4(+) serves as cofactor. The cofactor is K(+).

It is found in the cytoplasm. The enzyme catalyses (R)-pantothenate + ATP = (R)-4'-phosphopantothenate + ADP + H(+). The protein operates within cofactor biosynthesis; coenzyme A biosynthesis; CoA from (R)-pantothenate: step 1/5. Catalyzes the phosphorylation of pantothenate (Pan), the first step in CoA biosynthesis. The chain is Type III pantothenate kinase from Campylobacter jejuni (strain RM1221).